Consider the following 925-residue polypeptide: Bifunctional glutamine synthetase adenylyltransferase/adenylyl-removing enzyme (925 aa).

The tract at residues 1-426 is adenylyl removase; it reads MTDASDLLSL…AQFDQVFADK (426 aa). An adenylyl transferase region spans residues 436–925; the sequence is DQAAGCIWSG…AALWARVFGA (490 aa).

The protein belongs to the GlnE family. The cofactor is Mg(2+).

It carries out the reaction [glutamine synthetase]-O(4)-(5'-adenylyl)-L-tyrosine + phosphate = [glutamine synthetase]-L-tyrosine + ADP. The catalysed reaction is [glutamine synthetase]-L-tyrosine + ATP = [glutamine synthetase]-O(4)-(5'-adenylyl)-L-tyrosine + diphosphate. Involved in the regulation of glutamine synthetase GlnA, a key enzyme in the process to assimilate ammonia. When cellular nitrogen levels are high, the C-terminal adenylyl transferase (AT) inactivates GlnA by covalent transfer of an adenylyl group from ATP to specific tyrosine residue of GlnA, thus reducing its activity. Conversely, when nitrogen levels are low, the N-terminal adenylyl removase (AR) activates GlnA by removing the adenylyl group by phosphorolysis, increasing its activity. The regulatory region of GlnE binds the signal transduction protein PII (GlnB) which indicates the nitrogen status of the cell. The protein is Bifunctional glutamine synthetase adenylyltransferase/adenylyl-removing enzyme of Burkholderia mallei (strain ATCC 23344).